The following is a 202-amino-acid chain: Dephospho-CoA kinase (202 aa).

The DPCK domain occupies 3–200 (TIGLTGGIGS…QRYLTLAANR (198 aa)). 11 to 16 (GSGKSA) contacts ATP.

Belongs to the CoaE family.

Its subcellular location is the cytoplasm. It catalyses the reaction 3'-dephospho-CoA + ATP = ADP + CoA + H(+). Its pathway is cofactor biosynthesis; coenzyme A biosynthesis; CoA from (R)-pantothenate: step 5/5. Catalyzes the phosphorylation of the 3'-hydroxyl group of dephosphocoenzyme A to form coenzyme A. The polypeptide is Dephospho-CoA kinase (Thiobacillus denitrificans (strain ATCC 25259 / T1)).